A 225-amino-acid chain; its full sequence is MAGLFITFEGGEGAGKTTVIQHIFQKLIAQGIDVIQTREPGGIKISEKIRSIIHDPEHLEMEERTEALLYAAARRQHLVEKVFPALEQGKVVLCDRFVDSSLAYQGYARGLGIDEVYAINHFVIQDCMPDLTLFFDIEPKKGLERIAANKNRERNRLDLENMQFHEAVYEGYQKVIARFPERIKTIQAEQALEAVEQDTMEIISSFLNEKEKGGNNEINYYGDSR.

10–17 (GGEGAGKT) serves as a coordination point for ATP.

It belongs to the thymidylate kinase family.

The catalysed reaction is dTMP + ATP = dTDP + ADP. In terms of biological role, phosphorylation of dTMP to form dTDP in both de novo and salvage pathways of dTTP synthesis. This chain is Thymidylate kinase, found in Oceanobacillus iheyensis (strain DSM 14371 / CIP 107618 / JCM 11309 / KCTC 3954 / HTE831).